A 398-amino-acid chain; its full sequence is Acetate kinase (398 aa).

Residue N8 coordinates Mg(2+). An ATP-binding site is contributed by K15. R89 provides a ligand contact to substrate. The active-site Proton donor/acceptor is the D146. Residues 206 to 210 (HIGNG), 283 to 285 (DMR), and 331 to 335 (GMGEN) contribute to the ATP site. Position 383 (E383) interacts with Mg(2+).

This sequence belongs to the acetokinase family. As to quaternary structure, homodimer. The cofactor is Mg(2+). Mn(2+) is required as a cofactor.

It localises to the cytoplasm. The enzyme catalyses acetate + ATP = acetyl phosphate + ADP. It participates in metabolic intermediate biosynthesis; acetyl-CoA biosynthesis; acetyl-CoA from acetate: step 1/2. Its function is as follows. Catalyzes the formation of acetyl phosphate from acetate and ATP. Can also catalyze the reverse reaction. The sequence is that of Acetate kinase from Streptococcus pyogenes serotype M12 (strain MGAS2096).